Consider the following 210-residue polypeptide: Putative RING-H2 finger protein ATL50 (210 aa).

A helical membrane pass occupies residues 35–55 (IVLLYITLLSIIFFVAALIHL). Residues 122–164 (CAVCLREFTAEDELRLLPKCSHAFHVECIDTWLLTNSTCPLCR) form an RING-type; atypical zinc finger. Positions 187–210 (SDGDNSQDSDSSFMLTDLDDVESK) are disordered.

It belongs to the RING-type zinc finger family. ATL subfamily.

It is found in the membrane. It carries out the reaction S-ubiquitinyl-[E2 ubiquitin-conjugating enzyme]-L-cysteine + [acceptor protein]-L-lysine = [E2 ubiquitin-conjugating enzyme]-L-cysteine + N(6)-ubiquitinyl-[acceptor protein]-L-lysine.. The protein operates within protein modification; protein ubiquitination. This Arabidopsis thaliana (Mouse-ear cress) protein is Putative RING-H2 finger protein ATL50 (ATL50).